The sequence spans 156 residues: 3-hydroxyacyl-[acyl-carrier-protein] dehydratase FabZ (156 aa).

The active site involves His50.

This sequence belongs to the thioester dehydratase family. FabZ subfamily.

The protein localises to the cytoplasm. It carries out the reaction a (3R)-hydroxyacyl-[ACP] = a (2E)-enoyl-[ACP] + H2O. In terms of biological role, involved in unsaturated fatty acids biosynthesis. Catalyzes the dehydration of short chain beta-hydroxyacyl-ACPs and long chain saturated and unsaturated beta-hydroxyacyl-ACPs. This is 3-hydroxyacyl-[acyl-carrier-protein] dehydratase FabZ from Janthinobacterium sp. (strain Marseille) (Minibacterium massiliensis).